We begin with the raw amino-acid sequence, 697 residues long: Elongation factor G 1 (697 aa).

In terms of domain architecture, tr-type G spans 8–283 (ERYRNFGIMA…AVVDFLPSPV (276 aa)). GTP-binding positions include 17-24 (AHIDAGKT), 81-85 (DTPGH), and 135-138 (NKMD).

This sequence belongs to the TRAFAC class translation factor GTPase superfamily. Classic translation factor GTPase family. EF-G/EF-2 subfamily.

The protein localises to the cytoplasm. Functionally, catalyzes the GTP-dependent ribosomal translocation step during translation elongation. During this step, the ribosome changes from the pre-translocational (PRE) to the post-translocational (POST) state as the newly formed A-site-bound peptidyl-tRNA and P-site-bound deacylated tRNA move to the P and E sites, respectively. Catalyzes the coordinated movement of the two tRNA molecules, the mRNA and conformational changes in the ribosome. The chain is Elongation factor G 1 from Anaeromyxobacter dehalogenans (strain 2CP-C).